Here is a 163-residue protein sequence, read N- to C-terminus: CASP-like protein 1C2 (163 aa).

Residues 1–7 lie on the Cytoplasmic side of the membrane; sequence MAKLHRL. A helical membrane pass occupies residues 8–28; that stretch reads ISAVLRLAAAGAAAAAAVIMV. Over 29-50 the chain is Extracellular; the sequence is TSHETTSLFGIEMEAKYSYTPS. The helical transmembrane segment at 51-71 threads the bilayer; sequence FVFFVVAFAVTFAYSLLAAVL. The Cytoplasmic portion of the chain corresponds to 72–80; it reads VRPGTTASR. The helical transmembrane segment at 81 to 101 threads the bilayer; sequence LVLLSDVTVGMLLTGAVAATG. At 102-129 the chain is on the extracellular side; the sequence is AISQVGKSGNEHAGWLPICAQVQAYCGH. The chain crosses the membrane as a helical span at residues 130–150; that stretch reads VMGALIAGFVSLLLYFLIIMY. Topologically, residues 151 to 163 are cytoplasmic; it reads SLHAVAEPLCSCH.

This sequence belongs to the Casparian strip membrane proteins (CASP) family. As to quaternary structure, homodimer and heterodimers.

It is found in the cell membrane. The chain is CASP-like protein 1C2 from Zea mays (Maize).